The chain runs to 274 residues: Formamidopyrimidine-DNA glycosylase (274 aa).

Residue P2 is the Schiff-base intermediate with DNA of the active site. The Proton donor role is filled by E3. K58 functions as the Proton donor; for beta-elimination activity in the catalytic mechanism. 2 residues coordinate DNA: H92 and R111. An FPG-type; degenerate zinc finger spans residues 239–273; it reads HVYGREGEPCERCGTIIEKIKVAQRGTHFCPLEQR. The active-site Proton donor; for delta-elimination activity is the R263.

It belongs to the FPG family. As to quaternary structure, monomer. The cofactor is Zn(2+).

It catalyses the reaction Hydrolysis of DNA containing ring-opened 7-methylguanine residues, releasing 2,6-diamino-4-hydroxy-5-(N-methyl)formamidopyrimidine.. It carries out the reaction 2'-deoxyribonucleotide-(2'-deoxyribose 5'-phosphate)-2'-deoxyribonucleotide-DNA = a 3'-end 2'-deoxyribonucleotide-(2,3-dehydro-2,3-deoxyribose 5'-phosphate)-DNA + a 5'-end 5'-phospho-2'-deoxyribonucleoside-DNA + H(+). Involved in base excision repair of DNA damaged by oxidation or by mutagenic agents. Acts as a DNA glycosylase that recognizes and removes damaged bases. Has a preference for oxidized purines, such as 7,8-dihydro-8-oxoguanine (8-oxoG). Has AP (apurinic/apyrimidinic) lyase activity and introduces nicks in the DNA strand. Cleaves the DNA backbone by beta-delta elimination to generate a single-strand break at the site of the removed base with both 3'- and 5'-phosphates. The protein is Formamidopyrimidine-DNA glycosylase of Lactiplantibacillus plantarum (strain ATCC BAA-793 / NCIMB 8826 / WCFS1) (Lactobacillus plantarum).